The chain runs to 229 residues: MNAAVPMLAIDGPSGAGKGTVAGLLARRLGWNLLDSGALYRLLAFAAVNHGVDLTNEEALKLLAAHLDVQFVAADDSHGQRIILEGEEVTDVIRTEQVGAGASQVAALPAVRDALLQRQRAFREAPGLVADGRDMGTVVFPDAPLKIFLTASAEERARRRYLQLKAKGADVDQSALLEEIRERDERDSQRAVAPLKPADDAILLDSTEMSIEAVVETIIHHCEQQGWDV.

Residue 12–20 (GPSGAGKGT) participates in ATP binding.

The protein belongs to the cytidylate kinase family. Type 1 subfamily.

The protein localises to the cytoplasm. The catalysed reaction is CMP + ATP = CDP + ADP. It catalyses the reaction dCMP + ATP = dCDP + ADP. In Pseudomonas paraeruginosa (strain DSM 24068 / PA7) (Pseudomonas aeruginosa (strain PA7)), this protein is Cytidylate kinase.